Here is a 547-residue protein sequence, read N- to C-terminus: GID complex substrate-recognition subunit 10 (547 aa).

2 stretches are compositionally biased toward polar residues: residues 1 to 11 (MPRSLDNFQNE) and 28 to 41 (GFPN…SNSQ). Disordered regions lie at residues 1-42 (MPRS…NSQR), 60-115 (EQDS…SNAT), 169-217 (RNSS…NPQS), and 285-313 (PAVL…QTPN). Basic residues predominate over residues 99–108 (SASRQRRRSG). Residues 169–185 (RNSSTFGSNPNSVFSAQ) show a composition bias toward polar residues. 3 stretches are compositionally biased toward low complexity: residues 186-199 (PTEP…SSFP), 207-217 (SRSISISNPQS), and 298-307 (SSSSASSYGS).

It belongs to the GID4/VID24 family. In terms of assembly, substrate-recognition component of the GID/CTLH complex. In the absence of stress, the complex exists as an inactive anticipatory complex (GID(Ant)), composed of Gid1, the E3 ubiquitin-ligase Gid2, Gid5, Gid8, and the RING-like subunit Gid9, awaiting a substrate receptor to form the active E3 ligase complex. When cells are shifted to glucose-containing medium, the substrate receptor Gid4 is induced and becomes part of the complex, named GID(SR4). Additionally, Gid7 transforms the GID(SR4) E3 ligase core into a higher-order supramolecular assembly (Chelator-GID(SR4)). Under osmotic or heat stress, the substrate receptor Gid10 is induced and becomes part of the complex, named GID(SR10). Interacts with proteins that have an N-terminal Pro/N-degron.

The protein localises to the nucleus. In terms of biological role, substrate-recognition component of the GID E3 ligase complex recruiting N termini and catalyzing ubiquitination of proteins targeted for degradation. GID E3 is regulated through assembly with interchangeable N-degron-binding substrate receptors induced by distinct environmental perturbations. Required for the adaptation to osmotic or heat stress. Specific for substrates with an N-terminal Pro (Pro/N-degron). The sequence is that of GID complex substrate-recognition subunit 10 (gid10) from Schizosaccharomyces pombe (strain 972 / ATCC 24843) (Fission yeast).